A 277-amino-acid polypeptide reads, in one-letter code: MALKTFNPTTPGQRQLVMVDRSALYKGKPVKALTEGKHSSGGRNNTGRITVRFRGGGHKQTLRIVDFKRDKVDAPATVERLEYDPNRTAFIALVKYEDGTQAYILAPQRLAVGDSVVAGNYVDVKPGNVMPLGNMPVGTIIHNIEVKIGKGGQLARSAGTYAQLVGRDQDYVIIRLNSGEQRLVHGRCRGTIGAVSNPDHMNTSIGKAGRNRWLGRKPHNRGVSMNPIDHPHGGGEGRTSGGRHPVTPWGKPTKGKKTRSNKSTNKFILLSRHKRKK.

Positions 199-277 (DHMNTSIGKA…ILLSRHKRKK (79 aa)) are disordered. Positions 209 to 220 (GRNRWLGRKPHN) are enriched in basic residues.

This sequence belongs to the universal ribosomal protein uL2 family. As to quaternary structure, part of the 50S ribosomal subunit. Forms a bridge to the 30S subunit in the 70S ribosome.

Its function is as follows. One of the primary rRNA binding proteins. Required for association of the 30S and 50S subunits to form the 70S ribosome, for tRNA binding and peptide bond formation. It has been suggested to have peptidyltransferase activity; this is somewhat controversial. Makes several contacts with the 16S rRNA in the 70S ribosome. This chain is Large ribosomal subunit protein uL2, found in Bradyrhizobium diazoefficiens (strain JCM 10833 / BCRC 13528 / IAM 13628 / NBRC 14792 / USDA 110).